The following is a 361-amino-acid chain: MRTLNLDLGERSYPIFIGQSLLQNPALFTPHLSSQQVLVVTNTTVAPLYLAQLKATLSHCDKLDSVVLPDGEQHKTLGVLNTIFDTLIAQRHNRKTTLIALGGGVVGDMTGFAAACYQRGVNFIQVPTTLLSQVDSSVGGKTGVNHPQGKNMIGAFYQPQAVVIDTQVLDTLPERELSAGLAEVIKYGIIADIPFFEWLETNMPALLARESEALAYAIEVSCAIKARVVAQDEKESGIRAILNLGHTFGHAIESHQGYGDWVHGEAVGAGMVLACELSSRLGWLDAKECDRAVALIAAAGLPTEPPSGMSPDAFMRYMAIDKKVLDGGLRLVLQRGLGNAVVTGDFDAVVLQQLLRDRCIG.

NAD(+)-binding positions include 70–75 (DGEQHK), 104–108 (GVVGD), 128–129 (TT), lysine 141, and lysine 150. Positions 183, 246, and 263 each coordinate Zn(2+).

This sequence belongs to the sugar phosphate cyclases superfamily. Dehydroquinate synthase family. It depends on Co(2+) as a cofactor. The cofactor is Zn(2+). Requires NAD(+) as cofactor.

It localises to the cytoplasm. The enzyme catalyses 7-phospho-2-dehydro-3-deoxy-D-arabino-heptonate = 3-dehydroquinate + phosphate. It participates in metabolic intermediate biosynthesis; chorismate biosynthesis; chorismate from D-erythrose 4-phosphate and phosphoenolpyruvate: step 2/7. Functionally, catalyzes the conversion of 3-deoxy-D-arabino-heptulosonate 7-phosphate (DAHP) to dehydroquinate (DHQ). In Teredinibacter turnerae (strain ATCC 39867 / T7901), this protein is 3-dehydroquinate synthase.